The sequence spans 189 residues: Isopentenyl-diphosphate Delta-isomerase (189 aa).

Positions 27 and 34 each coordinate Mn(2+). One can recognise a Nudix hydrolase domain in the interval 32–171 (PLHFAFSTYI…PFVFSPWLVD (140 aa)). Residue Cys-69 is part of the active site. Cys-69 is a binding site for Mg(2+). Residue His-71 participates in Mn(2+) binding. Residue Glu-89 participates in Mg(2+) binding. Mn(2+) is bound by residues Glu-119 and Glu-121. Glu-121 is a catalytic residue.

It belongs to the IPP isomerase type 1 family. It depends on Mg(2+) as a cofactor. The cofactor is Mn(2+).

The protein resides in the cytoplasm. The catalysed reaction is isopentenyl diphosphate = dimethylallyl diphosphate. The protein operates within isoprenoid biosynthesis; dimethylallyl diphosphate biosynthesis; dimethylallyl diphosphate from isopentenyl diphosphate: step 1/1. In terms of biological role, catalyzes the 1,3-allylic rearrangement of the homoallylic substrate isopentenyl (IPP) to its highly electrophilic allylic isomer, dimethylallyl diphosphate (DMAPP). The polypeptide is Isopentenyl-diphosphate Delta-isomerase (Corynebacterium glutamicum (strain ATCC 13032 / DSM 20300 / JCM 1318 / BCRC 11384 / CCUG 27702 / LMG 3730 / NBRC 12168 / NCIMB 10025 / NRRL B-2784 / 534)).